Consider the following 355-residue polypeptide: 3-dehydroquinate synthase (355 aa).

NAD(+) is bound by residues 71–76 (EGEASK), 105–109 (GVVGD), 129–130 (TS), Lys142, and Lys151. The Zn(2+) site is built by Glu184, His246, and His263.

The protein belongs to the sugar phosphate cyclases superfamily. Dehydroquinate synthase family. The cofactor is Co(2+). Requires Zn(2+) as cofactor. NAD(+) is required as a cofactor.

The protein localises to the cytoplasm. The catalysed reaction is 7-phospho-2-dehydro-3-deoxy-D-arabino-heptonate = 3-dehydroquinate + phosphate. It participates in metabolic intermediate biosynthesis; chorismate biosynthesis; chorismate from D-erythrose 4-phosphate and phosphoenolpyruvate: step 2/7. Catalyzes the conversion of 3-deoxy-D-arabino-heptulosonate 7-phosphate (DAHP) to dehydroquinate (DHQ). In Streptococcus thermophilus (strain CNRZ 1066), this protein is 3-dehydroquinate synthase.